We begin with the raw amino-acid sequence, 135 residues long: Transcription antitermination protein NusB (135 aa).

Positions Ala-115–Ser-135 are disordered.

This sequence belongs to the NusB family.

Functionally, involved in transcription antitermination. Required for transcription of ribosomal RNA (rRNA) genes. Binds specifically to the boxA antiterminator sequence of the ribosomal RNA (rrn) operons. This chain is Transcription antitermination protein NusB, found in Frankia casuarinae (strain DSM 45818 / CECT 9043 / HFP020203 / CcI3).